A 35-amino-acid chain; its full sequence is Alpha-amanitin proprotein 2 (35 aa).

A propeptide spanning residues 1-10 (MFDTNSTRLP) is cleaved from the precursor. A (3R,4R)-4,5-dihydroxyisoleucine; in form alpha-amanitin modification is found at isoleucine 11. Isoleucine 11 carries the post-translational modification (3R,4S)-4-hydroxyisoleucine; in form gamma-amanitin. Residues 11–18 (IWGIGCNP) constitute a cross-link (cyclopeptide (Ile-Pro)). Positions 12–16 (WGIGC) form a cross-link, 2'-cysteinyl-6'-hydroxytryptophan sulfoxide (Trp-Cys). At proline 18 the chain carries 4-hydroxyproline. Positions 19–35 (WTAEHVDQTLVSGNDIC) are excised as a propeptide.

The protein belongs to the MSDIN fungal toxin family. In terms of processing, processed by the macrocyclase-peptidase enzyme POPB to yield a toxic bicyclic octapeptide. POPB first removes 10 residues from the N-terminus. Conformational trapping of the remaining peptide forces the enzyme to release this intermediate rather than proceed to macrocyclization. The enzyme rebinds the remaining peptide in a different conformation and catalyzes macrocyclization of the N-terminal 8 residues.

In terms of biological role, major toxin belonging to the bicyclic octapeptides amatoxins that acts by binding non-competitively to RNA polymerase II and greatly slowing the elongation of transcripts from target promoters. The polypeptide is Alpha-amanitin proprotein 2 (Galerina marginata (strain CBS 339.88)).